A 497-amino-acid polypeptide reads, in one-letter code: MTKMIPPVPTAAAAVMMPTPKQKIGFSIESIVGNDVSTAGGNSTPDLSGPQSPPPGERNVPGSPPQTPPATLTLIPGSPPHHLMAPPAHGLPYPHPHAQQQQQQHLQAPHPHPHLSPAQQHVLHQHLLMQHQHPGTPKSHQDIQELLQRLHHNAAMASGLSPLQTRLSPETEQPQMAVSLKRERSPAPPAMEQAENPAQRIQPPHTPPKSVSPQSSQPSSSPTLLISSPHATPPQQQQQQPPPNYPKPAMMHPGGAGPMMMPGMPPAGLVRPFPMGPGGPPMPQGQPGLPDIKALPPYINAPPELPPQHNPHLIAAAQFQMAAALQAGHVLGPAAAAAAAAGLPPHAAQFMPNPGMARDSYQLYPWLLSRHGRIFPHRFPGSFLVPPFRKPKRIRTAFSPSQLLKLEHAFESNQYVVGAERKALAQNLNLSETQVKVWFQNRRTKHKRMQQEDEKGGEGGSQRNMHNGSGDEDDDELIDMEMDECPSDEEHELDASH.

3 disordered regions span residues 34–117 (NDVS…HLSP), 161–262 (SPLQ…MMMP), and 441–497 (NRRT…DASH). Polar residues predominate over residues 35–50 (DVSTAGGNSTPDLSGP). Over residues 51 to 68 (QSPPPGERNVPGSPPQTP) the composition is skewed to pro residues. The segment covering 96–117 (PHAQQQQQQHLQAPHPHPHLSP) has biased composition (low complexity). Polar residues predominate over residues 161-176 (SPLQTRLSPETEQPQM). Low complexity-rich tracts occupy residues 208–239 (PKSV…QQQQ) and 248–262 (PAMM…MMMP). Residues 391-450 (PKRIRTAFSPSQLLKLEHAFESNQYVVGAERKALAQNLNLSETQVKVWFQNRRTKHKRMQ) constitute a DNA-binding region (homeobox). Over residues 470 to 497 (GDEDDDELIDMEMDECPSDEEHELDASH) the composition is skewed to acidic residues.

The protein belongs to the EMX homeobox family.

The protein resides in the nucleus. Acts as a homeotic selector gene controlling antennal and mandibular segment identity. This chain is Homeotic protein empty spiracles (ems), found in Drosophila melanogaster (Fruit fly).